A 117-amino-acid chain; its full sequence is Ribonuclease P protein component (117 aa).

It belongs to the RnpA family. Consists of a catalytic RNA component (M1 or rnpB) and a protein subunit.

It catalyses the reaction Endonucleolytic cleavage of RNA, removing 5'-extranucleotides from tRNA precursor.. In terms of biological role, RNaseP catalyzes the removal of the 5'-leader sequence from pre-tRNA to produce the mature 5'-terminus. It can also cleave other RNA substrates such as 4.5S RNA. The protein component plays an auxiliary but essential role in vivo by binding to the 5'-leader sequence and broadening the substrate specificity of the ribozyme. This is Ribonuclease P protein component from Limosilactobacillus reuteri subsp. reuteri (strain JCM 1112) (Lactobacillus reuteri).